Here is a 431-residue protein sequence, read N- to C-terminus: Protein CLT2, chloroplastic (431 aa).

A chloroplast-targeting transit peptide spans 1–79; sequence MDTVLMATTP…PMRRPRFSVG (79 aa). The next 10 membrane-spanning stretches (helical) occupy residues 99-119, 122-142, 163-183, 188-208, 212-232, 244-264, 284-304, 343-363, 365-385, and 403-423; these read VVIV…LVPM, YPFF…FTIL, FAII…AAAM, VIPI…LLIL, FLLN…VAVS, IGFL…GASI, IFVV…LLLP, ILPL…LHLV, ISSA…AVYI, and FTMG…PTTP.

This sequence belongs to the CRT-like transporter family.

The protein localises to the plastid. It localises to the chloroplast membrane. Involved in thiol transport from the plastid to the cytosol. Transports probably both glutathione (GSH) and its precursor, gamma-glutamylcysteine (gamma-EC). The protein is Protein CLT2, chloroplastic of Arabidopsis thaliana (Mouse-ear cress).